Consider the following 689-residue polypeptide: MMKRQLHRMRQLAHTGSSGRTPETAEFLGEDLLQVEQRLEPAKRAAHNVHKRLQACLQGQSGADMDKRVKKLPLMALSTAMAESFKELDPDSSMGKALEMSCAIQNQLARILAEFEMTLERDVLQPLNRLSEEELPAILKRKKSLQKLVSDWNTLKSRLSQAAKNSGSSQSLGGGSSSHTHMATANKVETLKEDEEELKRKVEQCKDEYLADLYHFSTKEDSYANYFTHLLEIQADYHRKSLTSLDTALAELRDNHSQADSSPLTTAAPFSRVYGVSLRTHLQDLGRDIALPIEACVLLLLSEGMQEEGLFRLAAGASVLKRLKQTMASDPHSLEEFCSDPHAVAGALKSYLRELPEPLMTSDLYDDWMRAASLKEPGARLEALHDVCSRLPQENFNNLRYLMKFLALLAEEQDVNKMTPSNIAIVLGPNLLWPPEKEGDQAQLDAASVSSIQVVGVVEVLIQNADTLFPGDINFSVSGIFSGLAPQEKPNSQQVSEELAPVAVPATAATPTPTPAPTPAPASMTVKERTESELPKPASPKVSRSPTDTTALAEDMTRKTKRPAPARPTMPPPQPSSSRSSPPALSLPAGSVSPGTPQALPRRLVGTSLRAPTVPPPLPPAPPQPARRQSRRLPVSPCPASPVISNMPAQVDQGAATEDRGGPEAVGGHPPTPVLPPQPRPRGLISETD.

The segment covering 1 to 11 has biased composition (basic residues); sequence MMKRQLHRMRQ. The disordered stretch occupies residues 1 to 24; sequence MMKRQLHRMRQLAHTGSSGRTPET. An interaction with CGNL1 region spans residues 1–275; the sequence is MMKRQLHRMR…TAAPFSRVYG (275 aa). The BAR domain occupies 17 to 262; sequence SSGRTPETAE…RDNHSQADSS (246 aa). Phosphoserine is present on residues S241 and S262. One can recognise a Rho-GAP domain in the interval 276 to 469; the sequence is VSLRTHLQDL…VLIQNADTLF (194 aa). The tract at residues 470 to 689 is interaction with CD2AP; it reads PGDINFSVSG…RPRGLISETD (220 aa). The tract at residues 507-689 is disordered; it reads TAATPTPTPA…RPRGLISETD (183 aa). 2 positions are modified to phosphoserine: S539 and S545. A compositionally biased stretch (pro residues) spans 565–575; sequence PARPTMPPPQP. Positions 576–594 are enriched in low complexity; it reads SSSRSSPPALSLPAGSVSP. The residue at position 586 (S586) is a Phosphoserine. Phosphothreonine is present on T596. Positions 611 to 620 match the SH3-binding motif; the sequence is APTVPPPLPP. Residues 613-625 show a composition bias toward pro residues; it reads TVPPPLPPAPPQP. Position 641 is a phosphoserine (S641). Residues 670–680 show a composition bias toward pro residues; it reads PPTPVLPPQPR.

Interacts with RAC1. Interacts with the exocyst via EXOC4 and EXOC8; required for the localization of both SH3BP1 and the exocyst to the leading edge of migrating cells. Interacts with CD2AP and CGNL1; probably part of a complex at cell junctions. Interacts with CAPZA1; recruits CAPZA1 to forming cell junctions. May interact with AFDN. Interacts with PLXND1; they dissociate upon SEMA3E binding to PLXND1 allowing SH3BP1 to transduce downstream signal through RAC1 inactivation. Interacts with ABL1, GRB2 and SRC (via SH3 domain).

It localises to the cell projection. The protein localises to the cell junction. The protein resides in the tight junction. Its subcellular location is the adherens junction. It is found in the phagocytic cup. It localises to the nucleus. The protein localises to the cytoplasm. The protein resides in the cytosol. Functionally, GTPase activating protein/GAP which specifically converts GTP-bound Rho-type GTPases including RAC1 and CDC42 in their inactive GDP-bound form. By specifically inactivating RAC1 at the leading edge of migrating cells, it regulates the spatiotemporal organization of cell protrusions which is important for proper cell migration. Also negatively regulates CDC42 in the process of actin remodeling and the formation of epithelial cell junctions. Through its GAP activity toward RAC1 and/or CDC42 plays a specific role in phagocytosis of large particles. Specifically recruited by a PI3 kinase/PI3K-dependent mechanism to sites of large particles engagement, inactivates RAC1 and/or CDC42 allowing the reorganization of the underlying actin cytoskeleton required for engulfment. It also plays a role in angiogenesis and the process of repulsive guidance as part of a semaphorin-plexin signaling pathway. Following the binding of PLXND1 to extracellular SEMA3E it dissociates from PLXND1 and inactivates RAC1, inducing the intracellular reorganization of the actin cytoskeleton and the collapse of cells. This is SH3 domain-binding protein 1 from Rattus norvegicus (Rat).